The primary structure comprises 343 residues: Heat-inducible transcription repressor HrcA (343 aa).

Belongs to the HrcA family.

Its function is as follows. Negative regulator of class I heat shock genes (grpE-dnaK-dnaJ and groELS operons). Prevents heat-shock induction of these operons. This Mycobacterium leprae (strain Br4923) protein is Heat-inducible transcription repressor HrcA.